We begin with the raw amino-acid sequence, 466 residues long: Benzoate transport protein (466 aa).

Topologically, residues 1–22 (MSREINVNQMIDDSKLTPFHWR) are cytoplasmic. A helical transmembrane segment spans residues 23–43 (VIILSTLIIIFDGYDLVIYGV). At 44–60 (ALPLLMKEWAIDPVTAG) the chain is on the periplasmic side. Residues 61–81 (FIGSIALFGMMFGALIFGTIA) traverse the membrane as a helical segment. The Cytoplasmic segment spans residues 82–93 (DKLEHLGVSRKK). Residues 94–114 (VIAVCIILFSLCTVLCGFSET) traverse the membrane as a helical segment. Residues 115–119 (TTQFS) lie on the Periplasmic side of the membrane. The helical transmembrane segment at 120-140 (IFRFLAGVGIGGVMPNVIALV) threads the bilayer. Over 141 to 150 (SEYAPKKFKS) the chain is Cytoplasmic. A helical transmembrane segment spans residues 151-171 (FFVTLMFSGYAIGGMTAAFLG). The Periplasmic segment spans residues 172-181 (SILVPLYGWK). A helical transmembrane segment spans residues 182–202 (IMFMIAGIPLVLLLPLMKVLP). Topologically, residues 203 to 258 (ESIDYLVRKKKDETVRFIMTKMVPSYQYQPDHVFVLNSSNQNQAQAPVKMIFQEQR) are cytoplasmic. Residues 259 to 279 (AFSTMMFWCSIFMTLIMVYAL) form a helical membrane-spanning segment. Residues 280 to 297 (GNWLPKLMIEAGYNLSKS) are Periplasmic-facing. The helical transmembrane segment at 298-318 (LIFLFSLNVGGMIGSILGGYL) threads the bilayer. At 319-325 (ADRYNVK) the chain is on the cytoplasmic side. The helical transmembrane segment at 326–346 (FVTMGLLLLGAISLSLLSFQF) threads the bilayer. Residues 347-348 (SS) lie on the Periplasmic side of the membrane. The helical transmembrane segment at 349-369 (VILYILIACAGAASIGAQIML) threads the bilayer. Residues 370–387 (LAYMAKFYAPNVRSTGIG) are Cytoplasmic-facing. Residues 388–408 (WGLGMGRVGAILGPILTGWLL) traverse the membrane as a helical segment. The Periplasmic portion of the chain corresponds to 409-414 (SLQLPH). A helical membrane pass occupies residues 415 to 435 (FYNFLALSIPAVLGIVTVFLI). Topologically, residues 436–466 (NDRRMYQPEPISPIANQNDTTTVKVNEAVSH) are cytoplasmic.

It belongs to the major facilitator superfamily. Aromatic acid:H(+) symporter (AAHS) (TC 2.A.1.15) family.

It localises to the cell inner membrane. Its function is as follows. Probable uptake of benzoate. This Acinetobacter baylyi (strain ATCC 33305 / BD413 / ADP1) protein is Benzoate transport protein (benK).